We begin with the raw amino-acid sequence, 631 residues long: MSTTTLTRREQRAKAQHFIDTLEGTAFPNSKRIYVTGSQHDIRVPMREIQLSPTLIGGSKDNPQFEENEAVPVYDTSGPYGDPEVAINVQQGLAKLRQPWIDARNDSEELDDRSSAYTRERLADDGLDDLRFTGLLTPKRAKAGKRVTQLHYARQGIVTPEMEFIAIRENMGRERIRSEVLRHQHPGMNFGARLPENITPEFVRDEVAAGRAIIPANINHPESEPMIIGRNFLVKVNANIGNSAVTSSIEEEVEKLVWSTRWGADTVMDLSTGRYIHETREWILRNSPVPIGTVPIYQALEKVNGIAEDLTWEAFRDTLLEQAEQGVDYFTIHAGVLLRYVPMTAKRLTGIVSRGGSIMAKWCLSHHKENFLFEHFREICEICSAYDVSLSLGDGLRPGSIQDANDEAQFSELHTLGELTNIAWEYDVQVMIEGPGHVPMHMIQRNMTEELESCHEAPFYTLGPLTTDIAPGYDHFTSGIGAAMIGWFGCAMLCYVTPKEHLGLPNKEDVKQGLITYKIAAHAADLAKGHPGAQIRDNAMSKARFEFRWEDQFNLALDPFTARAYHDETLPQESGKVAHFCSMCGPKFCSMKISQEVRDYAAAQAIEVGMADMSENFRAKGGEIYLKREEA.

Residues Asn-239, Met-268, Tyr-297, His-333, 353-355, 394-397, and Glu-433 each bind substrate; these read SRG and DGLR. Zn(2+) is bound at residue His-437. Substrate is bound at residue Tyr-460. His-501 lines the Zn(2+) pocket. [4Fe-4S] cluster contacts are provided by Cys-581, Cys-584, and Cys-589.

It belongs to the ThiC family. Homodimer. The cofactor is [4Fe-4S] cluster.

The catalysed reaction is 5-amino-1-(5-phospho-beta-D-ribosyl)imidazole + S-adenosyl-L-methionine = 4-amino-2-methyl-5-(phosphooxymethyl)pyrimidine + CO + 5'-deoxyadenosine + formate + L-methionine + 3 H(+). It functions in the pathway cofactor biosynthesis; thiamine diphosphate biosynthesis. Catalyzes the synthesis of the hydroxymethylpyrimidine phosphate (HMP-P) moiety of thiamine from aminoimidazole ribotide (AIR) in a radical S-adenosyl-L-methionine (SAM)-dependent reaction. This chain is Phosphomethylpyrimidine synthase, found in Salmonella typhi.